The primary structure comprises 207 residues: Cytochrome c biogenesis ATP-binding export protein CcmA (207 aa).

An ABC transporter domain is found at 4–207 (LEARELLCER…RISLTQTRAA (204 aa)). Residue 36 to 43 (GSNGAGKT) participates in ATP binding.

This sequence belongs to the ABC transporter superfamily. CcmA exporter (TC 3.A.1.107) family. As to quaternary structure, the complex is composed of two ATP-binding proteins (CcmA) and two transmembrane proteins (CcmB).

Its subcellular location is the cell inner membrane. The enzyme catalyses heme b(in) + ATP + H2O = heme b(out) + ADP + phosphate + H(+). Its function is as follows. Part of the ABC transporter complex CcmAB involved in the biogenesis of c-type cytochromes; once thought to export heme, this seems not to be the case, but its exact role is uncertain. Responsible for energy coupling to the transport system. This is Cytochrome c biogenesis ATP-binding export protein CcmA from Shigella sonnei (strain Ss046).